Reading from the N-terminus, the 364-residue chain is Chaperone protein DnaJ (364 aa).

Positions 4–69 constitute a J domain; it reads DYYEILGLSK…NKKAKYDRFG (66 aa). A CR-type zinc finger spans residues 135–213; it reads GYKNNINITR…CKGKGSLTKQ (79 aa). Zn(2+) is bound by residues Cys-148, Cys-151, Cys-165, Cys-168, Cys-187, Cys-190, Cys-201, and Cys-204. CXXCXGXG motif repeat units lie at residues 148-155, 165-172, 187-194, and 201-208; these read CDSCLGKK, CNMCNGSG, CSKCYGEG, and CKSCKGKG.

Belongs to the DnaJ family. As to quaternary structure, homodimer. Zn(2+) is required as a cofactor.

It localises to the cytoplasm. Participates actively in the response to hyperosmotic and heat shock by preventing the aggregation of stress-denatured proteins and by disaggregating proteins, also in an autonomous, DnaK-independent fashion. Unfolded proteins bind initially to DnaJ; upon interaction with the DnaJ-bound protein, DnaK hydrolyzes its bound ATP, resulting in the formation of a stable complex. GrpE releases ADP from DnaK; ATP binding to DnaK triggers the release of the substrate protein, thus completing the reaction cycle. Several rounds of ATP-dependent interactions between DnaJ, DnaK and GrpE are required for fully efficient folding. Also involved, together with DnaK and GrpE, in the DNA replication of plasmids through activation of initiation proteins. The protein is Chaperone protein DnaJ of Borreliella burgdorferi (strain ATCC 35210 / DSM 4680 / CIP 102532 / B31) (Borrelia burgdorferi).